The sequence spans 26 residues: MTIDKNWLNRSNKDPGRSLRFTHQPV.

A disordered region spans residues 1–26 (MTIDKNWLNRSNKDPGRSLRFTHQPV).

The protein is Protein YsdD of Escherichia coli (strain K12).